The chain runs to 318 residues: Transaldolase (318 aa).

The active-site Schiff-base intermediate with substrate is Lys-132.

It belongs to the transaldolase family. Type 1 subfamily. As to quaternary structure, homodimer.

It is found in the cytoplasm. The catalysed reaction is D-sedoheptulose 7-phosphate + D-glyceraldehyde 3-phosphate = D-erythrose 4-phosphate + beta-D-fructose 6-phosphate. Its pathway is carbohydrate degradation; pentose phosphate pathway; D-glyceraldehyde 3-phosphate and beta-D-fructose 6-phosphate from D-ribose 5-phosphate and D-xylulose 5-phosphate (non-oxidative stage): step 2/3. In terms of biological role, transaldolase is important for the balance of metabolites in the pentose-phosphate pathway. The polypeptide is Transaldolase (Shewanella putrefaciens (strain CN-32 / ATCC BAA-453)).